Here is a 437-residue protein sequence, read N- to C-terminus: Trigger factor (437 aa).

A PPIase FKBP-type domain is found at Gly-161–Pro-246.

Belongs to the FKBP-type PPIase family. Tig subfamily.

The protein localises to the cytoplasm. It carries out the reaction [protein]-peptidylproline (omega=180) = [protein]-peptidylproline (omega=0). Functionally, involved in protein export. Acts as a chaperone by maintaining the newly synthesized protein in an open conformation. Functions as a peptidyl-prolyl cis-trans isomerase. In Alcanivorax borkumensis (strain ATCC 700651 / DSM 11573 / NCIMB 13689 / SK2), this protein is Trigger factor.